Consider the following 277-residue polypeptide: Bis(5'-nucleosyl)-tetraphosphatase, symmetrical (277 aa).

This sequence belongs to the Ap4A hydrolase family.

The catalysed reaction is P(1),P(4)-bis(5'-adenosyl) tetraphosphate + H2O = 2 ADP + 2 H(+). Hydrolyzes diadenosine 5',5'''-P1,P4-tetraphosphate to yield ADP. In Bordetella bronchiseptica (strain ATCC BAA-588 / NCTC 13252 / RB50) (Alcaligenes bronchisepticus), this protein is Bis(5'-nucleosyl)-tetraphosphatase, symmetrical.